The primary structure comprises 689 residues: Elongation factor G (689 aa).

Residues 8 to 283 (SKCRNIGIMA…AVVDFLPAPN (276 aa)) form the tr-type G domain. Residues 17–24 (AHIDAGKT), 81–85 (DTPGH), and 135–138 (NKMD) contribute to the GTP site.

The protein belongs to the TRAFAC class translation factor GTPase superfamily. Classic translation factor GTPase family. EF-G/EF-2 subfamily.

It localises to the cytoplasm. Functionally, catalyzes the GTP-dependent ribosomal translocation step during translation elongation. During this step, the ribosome changes from the pre-translocational (PRE) to the post-translocational (POST) state as the newly formed A-site-bound peptidyl-tRNA and P-site-bound deacylated tRNA move to the P and E sites, respectively. Catalyzes the coordinated movement of the two tRNA molecules, the mRNA and conformational changes in the ribosome. The protein is Elongation factor G of Ehrlichia ruminantium (strain Welgevonden).